The sequence spans 1538 residues: Lhr helicase/uracil glycosylase (1538 aa).

The interval 1–897 is lhr-Core; the sequence is MADNPDPSSL…ERRASVLSLD (897 aa). Residues Gln34, Lys57, Thr58, Asp179, Glu180, Ile398, Arg415, and His418 each contribute to the ATP site. Positions 38–235 constitute a Helicase ATP-binding domain; that stretch reads WHVAARSEHA…FLGGDRPVTV (198 aa). The DEVH box motif lies at 179–182; sequence DEVH. The region spanning 284 to 462 is the Helicase C-terminal domain; it reads GILDEVLRHR…NLTPPHNPLD (179 aa). The tract at residues 463-552 is beta-sheet bundle; it reads VLAQQTVAAA…VTSGGTIPDR (90 aa). Residues 553 to 623 are WH domain; that stretch reads GMYSVLLPEG…SARLPFWRGE (71 aa). The domain 4 stretch occupies residues 624–897; it reads GNGRPAELGE…ERRASVLSLD (274 aa). The tract at residues 898–1538 is lhr-CTD; sequence SELLRNLLGQ…SSSPQGLDWG (641 aa). Positions 1287 to 1312 are disordered; sequence SNARTSTRRSHRARRGRPVYAQPVSP. Residues 1292-1303 show a composition bias toward basic residues; sequence STRRSHRARRGR.

This sequence belongs to the Lhr helicase family. In terms of assembly, homooligomerizes, probably a homotetramer. The cofactor is Ca(2+). Uracil deglycosylase activity does not require a cofactor. is required as a cofactor.

It catalyses the reaction Couples ATP hydrolysis with the unwinding of duplex DNA by translocating in the 3'-5' direction.. The catalysed reaction is ATP + H2O = ADP + phosphate + H(+). It carries out the reaction Hydrolyzes single-stranded DNA or mismatched double-stranded DNA and polynucleotides, releasing free uracil.. Functionally, a 3'-5' helicase probably involved in DNA repair. Translocates in an ATP-dependent manner 3'-to-5' on single-stranded (ss)DNA, unwinding any encountered duplex nucleic acid. An RNA:DNA hybrid with a 3'-ssDNA loading strand is a 4.5-fold better helicase substrate than 3'-tailed double-stranded (ds)DNA; substrates where the helicase loads on a 3'-ssRNA tail (DNA:RNA and RNA:RNA) are not unwound. Unlike its M.smegmatis counterpart, the ATPase is not ssDNA-dependent. Forms a clamp around the ssDNA loading strand. In terms of biological role, excises uracil residues from DNA; forked DNA with a dU residue is the best substrate followed by ssDNA. Inactive on dsDNA with a dU residue or DNA with an 8-oxoguanine residue. Uracil residues in DNA can arise as a result of misincorporation of dUMP residues by DNA polymerase or due to deamination of cytosine. The protein is Lhr helicase/uracil glycosylase of Escherichia coli (strain K12).